Reading from the N-terminus, the 487-residue chain is Cytochrome P450 monooxygenase pyvB (487 aa).

A helical membrane pass occupies residues 17 to 37 (PAYSSVVIGALVVCLVCLVWP). Cys426 is a heme binding site.

It belongs to the cytochrome P450 family. It depends on heme as a cofactor.

It is found in the membrane. Its pathway is secondary metabolite biosynthesis. Its function is as follows. Cytochrome P450 monooxygenase; part of the gene cluster that mediates the biosynthesis of pyranoviolin A, a pyranonigrin analog with a C-3 methoxy group. Initially, the PKS portion of pyvA synthesizes C-10 carbon chain from 5 molecules of malonyl-CoA, which is then condensed with the thiolation (T) domain-bound glycine activated by the adenylation (A) domain. The subsequent chain release by Dieckmann condensation (DKC) could be catalyzed by the TE domain present at the C-terminus of pyvA and/or the alpha/beta hydrolase pyvD, installing the tetramic acid moiety. The FAD-dependent monooxygenase pyvC next epoxidizes one of the olefins of the polyketide part, and the epoxide ring-opening induces the dihydro-gamma-pyrone ring formation. The cytochrome P450 monooxygeanse pyvB would be responsible for the 2 consecutive reactions, in which the dihydro-gamma-pyrone is oxidized to gamma-pyrone and C-7 is hydroxylated to yield pyranonigrin F. Finally, the O-methyltransferase pyvH methylates the C-3 hydroxy group to complete the biosynthesis. The protein is Cytochrome P450 monooxygenase pyvB of Aspergillus violaceofuscus (strain CBS 115571).